The sequence spans 108 residues: Cytochrome c-555 (108 aa).

An N-terminal signal peptide occupies residues 1–22 (MSRFVSAALVGAALLVSGNAFA). Residues cysteine 36, cysteine 39, histidine 40, and methionine 82 each coordinate heme c.

In terms of processing, binds 1 heme c group covalently per subunit.

Its function is as follows. This basic c-type monoheme cytochrome has been found exclusively in the green photosynthetic bacteria, although its role in bacterial photosynthesis is not established. It has an unusually low redox potential compared with mitochondrial cytochrome c. It is reactive with cytochrome c oxidases but not with reductases. This is Cytochrome c-555 from Chlorobaculum tepidum (strain ATCC 49652 / DSM 12025 / NBRC 103806 / TLS) (Chlorobium tepidum).